Consider the following 163-residue polypeptide: Ribonuclease P protein subunit p25-like protein (163 aa).

2 disordered regions span residues 1-24 (MEQY…LPPD) and 126-163 (LDPS…DTRS). Residues 153 to 163 (RPRRRARDTRS) show a composition bias toward basic residues.

It belongs to the histone-like Alba family.

The protein localises to the nucleus. In terms of biological role, may be a component of ribonuclease P or MRP. This is Ribonuclease P protein subunit p25-like protein (Rpp25l) from Mus musculus (Mouse).